A 408-amino-acid chain; its full sequence is Tripartite motif-containing protein 59 (408 aa).

The segment at 10–60 adopts an RING-type zinc-finger fold; that stretch reads CSICYSLFEDPRVLPCSHTFCRSCLEGVIQLSSNFSIWRPLRVPLKCPNCR. Residues 92–134 form a B box-type zinc finger; sequence SDVATCSEHYRQPLNVYCLLDKKLVCGHCLTIGKHNGHPIDDL. Positions 97, 100, 120, and 126 each coordinate Zn(2+). Residues 163 to 247 are a coiled coil; it reads LIEKLKEQKA…LNTSIQKEES (85 aa). A helical membrane pass occupies residues 333-353; the sequence is ANPLSVTFIFTVIIAIAVLSF.

This sequence belongs to the TRIM/RBCC family. In terms of assembly, interacts with ECSIT.

It localises to the endoplasmic reticulum membrane. Its function is as follows. May serve as a multifunctional regulator for innate immune signaling pathways. This is Tripartite motif-containing protein 59 (TRIM59) from Gallus gallus (Chicken).